The sequence spans 193 residues: 5'RNA triphosphatase A449R (193 aa).

Mn(2+) is required as a cofactor.

It carries out the reaction a 5'-end triphospho-ribonucleoside in mRNA + H2O = a 5'-end diphospho-ribonucleoside in mRNA + phosphate + H(+). In terms of biological role, catalyzes the first stes of cap formation: by removing the gamma-phosphate from the 5'-triphosphate end of nascent mRNA to yield a diphosphate end. The chain is 5'RNA triphosphatase A449R (A449R) from Chlorella (PBCV-1).